The primary structure comprises 353 residues: Uroporphyrinogen decarboxylase (353 aa).

Substrate is bound by residues 27–31, Phe46, Asp76, Tyr152, Ser207, and His321; that span reads RQAGR.

Belongs to the uroporphyrinogen decarboxylase family. Homodimer.

It localises to the cytoplasm. It carries out the reaction uroporphyrinogen III + 4 H(+) = coproporphyrinogen III + 4 CO2. It functions in the pathway porphyrin-containing compound metabolism; protoporphyrin-IX biosynthesis; coproporphyrinogen-III from 5-aminolevulinate: step 4/4. Functionally, catalyzes the decarboxylation of four acetate groups of uroporphyrinogen-III to yield coproporphyrinogen-III. This chain is Uroporphyrinogen decarboxylase, found in Listeria monocytogenes serotype 4b (strain CLIP80459).